Consider the following 404-residue polypeptide: G-protein coupled receptor 143 (404 aa).

Residues 1-28 (MASPRLGTFCCPTRDAATQLVLSFQPRA) lie on the Extracellular side of the membrane. The chain crosses the membrane as a helical span at residues 29–49 (FHALCLGSGGLRLALGLLQLL). Over 50 to 78 (PGRRPAGPGSPATSPPASVRILRAAAACD) the chain is Cytoplasmic. Residues 79–99 (LLGCLGMVIRSTVWLGFPNFV) form a helical membrane-spanning segment. Residues 100–124 (DSVSDMNHTEIWPAAFCVGSAMWIQ) are Extracellular-facing. A glycan (N-linked (GlcNAc...) asparagine) is linked at asparagine 106. Residues 125–145 (LLYSACFWWLFCYAVDAYLVI) form a helical membrane-spanning segment. The Cytoplasmic segment spans residues 146-149 (RRSA). Residues 150–170 (GLSTILLYHIMAWGLATLLCV) traverse the membrane as a helical segment. At 171 to 191 (EGAAMLYYPSVSRCERGLDHA) the chain is on the extracellular side. A helical transmembrane segment spans residues 192-212 (IPHYVTMYLPLLLVLVANPIL). Residues 213-248 (FQKTVTAVASLLKGRQGIYTENERRMGAVIKIRFFK) are Cytoplasmic-facing. Positions 221–238 (ASLLKGRQGIYTENERRM) are necessary for its G protein-activation ability and normal distribution of melanosomes. The lysosomal/melanosomal membrane localization signal motif lies at 222 to 231 (SLLKGRQGIY). Residues 249–269 (IMLVLIICWLSNIINESLLFY) traverse the membrane as a helical segment. The Extracellular segment spans residues 270–292 (LEMQTDINGGSLKPVRTAAKTTW). The chain crosses the membrane as a helical span at residues 293–313 (FIMGILNPAQGFLLSLAFYGW). The Cytoplasmic portion of the chain corresponds to 314 to 404 (TGCSLGFQSP…DPALPTHGDL (91 aa)). The short motif at 329 to 330 (WE) is the lysosomal/melanosomal membrane localization signal element. Positions 338–404 (EGAHPSPLMP…DPALPTHGDL (67 aa)) are disordered. Polar residues predominate over residues 355–366 (KVSQVGGQTSDE).

Belongs to the G-protein coupled receptor OA family. As to quaternary structure, interacts with heterotrimeric G(i) proteins. Interacts with ARRB1 and ARRB2. Interacts with MLANA. Glycosylated. In terms of processing, phosphorylated. Expressed at high levels in the retina, including the retinal pigment epithelium (RPE), and in melanocytes. Weak expression is observed in brain and adrenal gland.

The protein resides in the melanosome membrane. The protein localises to the lysosome membrane. It is found in the apical cell membrane. Its function is as follows. Receptor for tyrosine, L-DOPA and dopamine. After binding to L-DOPA, stimulates Ca(2+) influx into the cytoplasm, increases secretion of the neurotrophic factor SERPINF1 and relocalizes beta arrestin at the plasma membrane; this ligand-dependent signaling occurs through a G(q)-mediated pathway in melanocytic cells. Its activity is mediated by G proteins which activate the phosphoinositide signaling pathway. Also plays a role as an intracellular G protein-coupled receptor involved in melanosome biogenesis, organization and transport. This chain is G-protein coupled receptor 143 (GPR143), found in Homo sapiens (Human).